Consider the following 97-residue polypeptide: Small ribosomal subunit protein bS6 (97 aa).

This sequence belongs to the bacterial ribosomal protein bS6 family.

Functionally, binds together with bS18 to 16S ribosomal RNA. The protein is Small ribosomal subunit protein bS6 of Dictyoglomus turgidum (strain DSM 6724 / Z-1310).